The sequence spans 59 residues: MAEHRGGSGNFAEDREKASDAGRKGGQHSGGNFKNDPQRASEAGKKGGQQSGGNKSGKS.

Composition is skewed to basic and acidic residues over residues 1–23 and 36–45; these read MAEH…DAGR and DPQRASEAGK. The interval 1–59 is disordered; sequence MAEHRGGSGNFAEDREKASDAGRKGGQHSGGNFKNDPQRASEAGKKGGQQSGGNKSGKS. Positions 46–59 are enriched in gly residues; sequence KGGQQSGGNKSGKS.

Belongs to the con-10 family.

This is an uncharacterized protein from Escherichia coli (strain K12).